Consider the following 472-residue polypeptide: Argininosuccinate lyase (472 aa).

The protein belongs to the lyase 1 family. Argininosuccinate lyase subfamily.

It is found in the cytoplasm. It carries out the reaction 2-(N(omega)-L-arginino)succinate = fumarate + L-arginine. It functions in the pathway amino-acid biosynthesis; L-arginine biosynthesis; L-arginine from L-ornithine and carbamoyl phosphate: step 3/3. The chain is Argininosuccinate lyase from Rhodococcus jostii (strain RHA1).